Here is a 328-residue protein sequence, read N- to C-terminus: Ribosomal RNA small subunit methyltransferase H (328 aa).

S-adenosyl-L-methionine contacts are provided by residues 64–66 (GGH), Asp83, Phe112, Asp129, and Gln136.

The protein belongs to the methyltransferase superfamily. RsmH family.

It localises to the cytoplasm. It carries out the reaction cytidine(1402) in 16S rRNA + S-adenosyl-L-methionine = N(4)-methylcytidine(1402) in 16S rRNA + S-adenosyl-L-homocysteine + H(+). Its function is as follows. Specifically methylates the N4 position of cytidine in position 1402 (C1402) of 16S rRNA. The protein is Ribosomal RNA small subunit methyltransferase H of Bdellovibrio bacteriovorus (strain ATCC 15356 / DSM 50701 / NCIMB 9529 / HD100).